A 123-amino-acid chain; its full sequence is Large ribosomal subunit protein bL17 (123 aa).

This sequence belongs to the bacterial ribosomal protein bL17 family. As to quaternary structure, part of the 50S ribosomal subunit. Contacts protein L32.

The sequence is that of Large ribosomal subunit protein bL17 from Borreliella afzelii (strain PKo) (Borrelia afzelii).